The primary structure comprises 206 residues: Charged multivesicular body protein 2a homolog 1 (206 aa).

A disordered region spans residues 1-32; sequence MSFFGGNKKTPEQELKDSKRELSKGQREMDRE. Basic and acidic residues predominate over residues 9–32; the sequence is KTPEQELKDSKRELSKGQREMDRE. 2 coiled-coil regions span residues 12-80 and 114-148; these read EQEL…RATK and NKQT…DMFE.

The protein belongs to the SNF7 family. In terms of assembly, probable core component of the endosomal sorting required for transport complex III (ESCRT-III). ESCRT-III components are thought to multimerize to form a flat lattice on the perimeter membrane of the endosome.

It is found in the endosome membrane. In terms of biological role, probable core component of the endosomal sorting required for transport complex III (ESCRT-III) which is involved in multivesicular bodies (MVBs) formation and sorting of endosomal cargo proteins into MVBs. MVBs contain intraluminal vesicles (ILVs) that are generated by invagination and scission from the limiting membrane of the endosome and are delivered to lysosomes enabling degradation of membrane proteins. This Dictyostelium discoideum (Social amoeba) protein is Charged multivesicular body protein 2a homolog 1 (chmp2a1).